Here is a 354-residue protein sequence, read N- to C-terminus: MGEQPIFSTRAHVFQIDPNTKKNWVPTSKHAVTVSYFYDSTRNVYRIISLDGSKAIINSTITPNMTFTKTSQKFGQWADSRANTVYGLGFSSEHHLSKFAEKFQEFKEAARLAKEKSQEKMELTSTPSQESAGGDLQSPLTPESINGTDDERTPDLTQNSEPRPEPTQNALPFTHSSAISKHWEAELATLKGNNAKLTAALLESTANVKQWKQQLAAYQEEAERLHKRVTELECVSSQANAVHTHKTELNQTIQELEETLKVKEEEIERLKQEIDNARELQEQRDSLTQKLQEVEIRNKDLEGQLSDLEQRLEKSQNEQEAFRNNLKTLLEILDGKIFELTELRDNLAKLLERS.

The WH1 domain occupies 1-110 (MGEQPIFSTR…EKFQEFKEAA (110 aa)). The residue at position 2 (Gly2) is an N-acetylglycine. The segment at 114-172 (KEKSQEKMELTSTPSQESAGGDLQSPLTPESINGTDDERTPDLTQNSEPRPEPTQNALP) is disordered. Composition is skewed to polar residues over residues 138–147 (SPLTPESING) and 155–172 (DLTQ…NALP). Positions 181 to 352 (KHWEAELATL…LRDNLAKLLE (172 aa)) form a coiled coil. A required for tetramerization region spans residues 290 to 354 (KLQEVEIRNK…DNLAKLLERS (65 aa)). The residue at position 306 (Ser306) is a Phosphoserine.

It belongs to the Homer family. Tetramer; this tetrameric structure is critical for forming the high-order complex with SHANK1, which in turn is necessary for the structural and functional integrity of dendritic spines. Interacts with GRM1, GRM5, ITPR1, DNM3, RYR1, RYR2 and SHANK3. Interacts with IFT57 and OPHN1. Encodes a coiled-coil structure that mediates homo- and heteromultimerization. Interacts with SHANK1; forms high-order polymerized complex with a mesh-like network structure, at least composed of SHANK1, HOMER1 and DLGAP1; the complex formation is SHANK1 multimerization dependent. Interacts with NFATC4. Interacts with DAGLA (via PPXXF motif); this interaction is required for the cell membrane localization of DAGLA. Interacts with SRGAP2.

Its subcellular location is the cytoplasm. The protein resides in the postsynaptic density. It localises to the synapse. It is found in the cell projection. The protein localises to the dendritic spine. Functionally, postsynaptic density scaffolding protein. Binds and cross-links cytoplasmic regions of GRM1, GRM5, ITPR1, DNM3, RYR1, RYR2, SHANK1 and SHANK3. By physically linking GRM1 and GRM5 with ER-associated ITPR1 receptors, it aids the coupling of surface receptors to intracellular calcium release. May also couple GRM1 to PI3 kinase through its interaction with AGAP2. Forms a high-order complex with SHANK1, which in turn is necessary for the structural and functional integrity of dendritic spines. Negatively regulates T cell activation by inhibiting the calcineurin-NFAT pathway. Acts by competing with calcineurin/PPP3CA for NFAT protein binding, hence preventing NFAT activation by PPP3CA. In Bos taurus (Bovine), this protein is Homer protein homolog 1.